The primary structure comprises 510 residues: Beta-glucosidase 12 (510 aa).

Residues 1 to 24 (MAAAGAMPGGLLLTFLLLAVVASG) form the signal peptide. Gln53 is a binding site for a beta-D-glucoside. Asn122 carries an N-linked (GlcNAc...) asparagine glycan. Residues His157 and 202 to 203 (NE) contribute to the a beta-D-glucoside site. Catalysis depends on Glu203, which acts as the Proton donor. 2 disulfide bridges follow: Cys208–Cys243 and Cys222–Cys230. The N-linked (GlcNAc...) asparagine glycan is linked to Asn229. Tyr346 contacts a beta-D-glucoside. N-linked (GlcNAc...) asparagine glycosylation is found at Asn361 and Asn371. Glu417 contributes to the a beta-D-glucoside binding site. Glu417 serves as the catalytic Nucleophile. A glycan (N-linked (GlcNAc...) asparagine) is linked at Asn425. Residues Trp466, 473 to 474 (EW), and Phe482 each bind a beta-D-glucoside.

The protein belongs to the glycosyl hydrolase 1 family.

The protein resides in the secreted. The catalysed reaction is Hydrolysis of terminal, non-reducing beta-D-glucosyl residues with release of beta-D-glucose.. In terms of biological role, hydrolyzes p-nitrophenyl beta-D-glucoside, p-nitrophenyl beta-D-galactoside, p-nitrophenyl beta-D-xyloside, p-nitrophenyl beta-D-fucoside, p-nitrophenyl beta-L-arabinoside, cello-oligosaccharides and laminaribiose. In Oryza sativa subsp. japonica (Rice), this protein is Beta-glucosidase 12.